A 423-amino-acid polypeptide reads, in one-letter code: Glucose-6-phosphate isomerase (423 aa).

The active-site Proton donor is E279. Catalysis depends on residues H300 and K413.

Belongs to the GPI family.

It is found in the cytoplasm. The enzyme catalyses alpha-D-glucose 6-phosphate = beta-D-fructose 6-phosphate. Its pathway is carbohydrate biosynthesis; gluconeogenesis. It participates in carbohydrate degradation; glycolysis; D-glyceraldehyde 3-phosphate and glycerone phosphate from D-glucose: step 2/4. Its function is as follows. Catalyzes the reversible isomerization of glucose-6-phosphate to fructose-6-phosphate. The sequence is that of Glucose-6-phosphate isomerase from Acholeplasma laidlawii (strain PG-8A).